A 439-amino-acid polypeptide reads, in one-letter code: Methylenetetrahydrofolate--tRNA-(uracil-5-)-methyltransferase TrmFO (439 aa).

9-14 (GAGLAG) contributes to the FAD binding site.

The protein belongs to the MnmG family. TrmFO subfamily. The cofactor is FAD.

It localises to the cytoplasm. It catalyses the reaction uridine(54) in tRNA + (6R)-5,10-methylene-5,6,7,8-tetrahydrofolate + NADH + H(+) = 5-methyluridine(54) in tRNA + (6S)-5,6,7,8-tetrahydrofolate + NAD(+). The enzyme catalyses uridine(54) in tRNA + (6R)-5,10-methylene-5,6,7,8-tetrahydrofolate + NADPH + H(+) = 5-methyluridine(54) in tRNA + (6S)-5,6,7,8-tetrahydrofolate + NADP(+). Its function is as follows. Catalyzes the folate-dependent formation of 5-methyl-uridine at position 54 (M-5-U54) in all tRNAs. In Desulforudis audaxviator (strain MP104C), this protein is Methylenetetrahydrofolate--tRNA-(uracil-5-)-methyltransferase TrmFO.